Here is a 184-residue protein sequence, read N- to C-terminus: Photosystem I assembly protein Ycf4 (184 aa).

Helical transmembrane passes span 22–42 (FCWA…GTSS) and 57–77 (IVFF…LFIS).

It belongs to the Ycf4 family.

Its subcellular location is the plastid. It is found in the chloroplast thylakoid membrane. Functionally, seems to be required for the assembly of the photosystem I complex. The chain is Photosystem I assembly protein Ycf4 from Gossypium barbadense (Sea Island cotton).